The chain runs to 363 residues: 3-dehydroquinate synthase (363 aa).

Residues 109–113 (GASTD), 133–134 (TT), K146, and K155 each bind NAD(+). Zn(2+) is bound by residues E188, H251, and H267.

This sequence belongs to the sugar phosphate cyclases superfamily. Dehydroquinate synthase family. It depends on NAD(+) as a cofactor. Co(2+) is required as a cofactor. Requires Zn(2+) as cofactor.

The protein resides in the cytoplasm. It catalyses the reaction 7-phospho-2-dehydro-3-deoxy-D-arabino-heptonate = 3-dehydroquinate + phosphate. It participates in metabolic intermediate biosynthesis; chorismate biosynthesis; chorismate from D-erythrose 4-phosphate and phosphoenolpyruvate: step 2/7. Its function is as follows. Catalyzes the conversion of 3-deoxy-D-arabino-heptulosonate 7-phosphate (DAHP) to dehydroquinate (DHQ). The polypeptide is 3-dehydroquinate synthase (Streptomyces coelicolor (strain ATCC BAA-471 / A3(2) / M145)).